The primary structure comprises 448 residues: Glucose-6-phosphate isomerase (448 aa).

Glutamate 290 serves as the catalytic Proton donor. Active-site residues include histidine 311 and lysine 425.

It belongs to the GPI family.

It is found in the cytoplasm. The enzyme catalyses alpha-D-glucose 6-phosphate = beta-D-fructose 6-phosphate. The protein operates within carbohydrate biosynthesis; gluconeogenesis. It participates in carbohydrate degradation; glycolysis; D-glyceraldehyde 3-phosphate and glycerone phosphate from D-glucose: step 2/4. Catalyzes the reversible isomerization of glucose-6-phosphate to fructose-6-phosphate. This chain is Glucose-6-phosphate isomerase, found in Lactococcus lactis subsp. cremoris (strain SK11).